The chain runs to 302 residues: MHALLQEILDEVRPLLGRGRVADYIPALADVPADQLGIAVCSAEGELFEAGDARTPFSIQSISKVFSLVQAIGHRGESLWERLGHEPSGQPFNSLVQLEFERGRPRNPFINAGALVICDVNQSRFATPELSMRDFVRHLSGNPLIVSDTKVAESEYQHRARNAAMAYLMQAFGNFHNDVEAVLRSYFHHCALRMNCVDLARAFGFLARDGICPQGGEAVLSPRQTKQVNAIMATSGLYDEAGNFAYRVGLPGKSGVGGGIVAVVPGRFTVCVWSPELNAAGNSLIGMAALEALSQRIGWSVF.

Substrate-binding residues include serine 61, asparagine 111, glutamate 155, asparagine 162, tyrosine 186, tyrosine 238, and valine 256.

The protein belongs to the glutaminase family. As to quaternary structure, homotetramer.

It carries out the reaction L-glutamine + H2O = L-glutamate + NH4(+). In Stutzerimonas stutzeri (strain A1501) (Pseudomonas stutzeri), this protein is Glutaminase.